An 867-amino-acid chain; its full sequence is Glutamate receptor 1.2 (867 aa).

An N-terminal signal peptide occupies residues 1 to 27 (MVRICIQTPILLSFLLVLLFFISNCFA). Residues 28 to 560 (SSQNNDDDKR…SMWVFFQPLT (533 aa)) are Extracellular-facing. N-linked (GlcNAc...) asparagine glycans are attached at residues Asn-301, Asn-400, Asn-496, and Asn-499. A helical transmembrane segment spans residues 561 to 581 (PNLWITSAAFFVLTGIIVWLI). Topologically, residues 582 to 590 (ERAENKEFQ) are cytoplasmic. Residues 591–611 (GSWPQQIGVVIWFGFSTLVYA) form a helical membrane-spanning segment. The Cytoplasmic segment spans residues 612 to 622 (HREKLQHNLSR). The chain crosses the membrane as a helical span at residues 623–643 (FVVTVWVFAVLILVTSYTATL). Over 644–792 (TSMMTVQQIR…NPITLYRFRG (149 aa)) the chain is Extracellular. N-linked (GlcNAc...) asparagine glycosylation is found at Asn-676, Asn-688, Asn-699, and Asn-748. Residues 793 to 813 (LFMITGVSFAFALAVLLILWL) traverse the membrane as a helical segment. The Cytoplasmic segment spans residues 814 to 867 (RERWEILVNSVNIYFSQRLRHFRILFTRTIHPSPLGLDNPIGENAVQMAQRNRR).

The protein belongs to the glutamate-gated ion channel (TC 1.A.10.1) family. May form heteromers. As to expression, expressed predominantly in roots and siliques.

The protein resides in the membrane. Glutamate-gated receptor that probably acts as a non-selective cation channel. May be involved in light-signal transduction and calcium homeostasis via the regulation of calcium influx into cells. This Arabidopsis thaliana (Mouse-ear cress) protein is Glutamate receptor 1.2 (GLR1.2).